The chain runs to 448 residues: Protein EVI2B (448 aa).

Positions 1–21 (MDPKYFILILFCGHLNNTFFS) are cleaved as a signal peptide. Residues Asn-16 and Asn-50 are each glycosylated (N-linked (GlcNAc...) asparagine). The Extracellular segment spans residues 22-202 (KTETITTEKQ…QTPQKNNYNS (181 aa)). The segment at 74–108 (AKVTAGQPTPAVYTSSEKPEAHTSAGQPLAYNTKQ) is disordered. Over residues 97–108 (SAGQPLAYNTKQ) the composition is skewed to polar residues. The N-linked (GlcNAc...) asparagine glycan is linked to Asn-114. Residues 203-226 (IAAILIGVLLTSMLVAIIIIVLWK) traverse the membrane as a helical segment. Topologically, residues 227–448 (CLRKPVLNDQ…SLPPPPAELL (222 aa)) are cytoplasmic. Thr-249 carries the post-translational modification Phosphothreonine. Phosphoserine is present on residues Ser-268, Ser-271, Ser-278, and Ser-294. Disordered stretches follow at residues 298–372 (IEDS…DSTS) and 427–448 (SIPP…AELL). 2 stretches are compositionally biased toward polar residues: residues 313–333 (VNGT…VSSS) and 350–372 (QESN…DSTS).

In terms of tissue distribution, bone marrow, peripheral blood mononuclear cells, fibroblasts and Epstein-Barr virus-transformed lymphoblastoid cell lines. Strongly expressed in granulocytic cells, and weakly on lymphocytes cells.

Its subcellular location is the membrane. Functionally, required for granulocyte differentiation and functionality of hematopoietic progenitor cells through the control of cell cycle progression and survival of hematopoietic progenitor cells. This is Protein EVI2B from Homo sapiens (Human).